A 371-amino-acid polypeptide reads, in one-letter code: Outer membrane protein P2 (371 aa).

Positions 1–20 (MKKTLAALIVGAFAASAANA) are cleaved as a signal peptide.

The protein belongs to the Gram-negative porin family. Homotrimer.

It localises to the cell outer membrane. Its function is as follows. Forms pores that allow passive diffusion of small molecules across the outer membrane. This is Outer membrane protein P2 (ompP2) from Haemophilus influenzae.